We begin with the raw amino-acid sequence, 301 residues long: N-acetylmuramic acid 6-phosphate etherase (301 aa).

The SIS domain maps to 59–222 (TSEALMHGGR…STSVMVKLGK (164 aa)). Glu-87 (proton donor) is an active-site residue. Residue Glu-118 is part of the active site.

This sequence belongs to the GCKR-like family. MurNAc-6-P etherase subfamily. Homodimer.

The catalysed reaction is N-acetyl-D-muramate 6-phosphate + H2O = N-acetyl-D-glucosamine 6-phosphate + (R)-lactate. It functions in the pathway amino-sugar metabolism; N-acetylmuramate degradation. Its function is as follows. Specifically catalyzes the cleavage of the D-lactyl ether substituent of MurNAc 6-phosphate, producing GlcNAc 6-phosphate and D-lactate. The polypeptide is N-acetylmuramic acid 6-phosphate etherase (Picosynechococcus sp. (strain ATCC 27264 / PCC 7002 / PR-6) (Agmenellum quadruplicatum)).